The following is a 263-amino-acid chain: Stress-response A/B barrel domain-containing protein UP3 (263 aa).

2 consecutive Stress-response A/B barrel domains span residues 49–142 (IEHI…AVDW) and 158–252 (VAKL…VVEF). Positions 261 to 263 (SSL) match the Peroxisomal targeting signal motif.

Homodimer.

Its subcellular location is the peroxisome. Its function is as follows. Involved in stress response. The protein is Stress-response A/B barrel domain-containing protein UP3 of Arabidopsis thaliana (Mouse-ear cress).